A 397-amino-acid polypeptide reads, in one-letter code: Cysteine protease ATG4A (397 aa).

C79 (nucleophile) is an active-site residue. Active-site residues include D279 and H281. The LIR signature appears at 392 to 395 (FEIL).

It belongs to the peptidase C54 family.

The protein resides in the cytoplasm. The enzyme catalyses [protein]-C-terminal L-amino acid-glycyl-phosphatidylethanolamide + H2O = [protein]-C-terminal L-amino acid-glycine + a 1,2-diacyl-sn-glycero-3-phosphoethanolamine. Its function is as follows. Cysteine protease that plays a key role in autophagy by mediating both proteolytic activation and delipidation of ATG8 family proteins. The protease activity is required for proteolytic activation of ATG8 family proteins: cleaves the C-terminal amino acid of ATG8 proteins to reveal a C-terminal glycine. Exposure of the glycine at the C-terminus is essential for ATG8 proteins conjugation to phosphatidylethanolamine (PE) and insertion to membranes, which is necessary for autophagy. Protease activity is also required to counteract formation of high-molecular weight conjugates of ATG8 proteins (ATG8ylation): acts as a deubiquitinating-like enzyme that removes ATG8 conjugated to other proteins, such as ATG3. In addition to the protease activity, also mediates delipidation of ATG8 family proteins. Catalyzes delipidation of PE-conjugated forms of ATG8 proteins during macroautophagy. In Xenopus laevis (African clawed frog), this protein is Cysteine protease ATG4A.